Consider the following 183-residue polypeptide: Oligoribonuclease (183 aa).

One can recognise an Exonuclease domain in the interval 10-173; that stretch reads LIWIDLEMTG…ADIRESIAEL (164 aa). The active site involves Y131.

The protein belongs to the oligoribonuclease family.

It is found in the cytoplasm. 3'-to-5' exoribonuclease specific for small oligoribonucleotides. This chain is Oligoribonuclease, found in Idiomarina loihiensis (strain ATCC BAA-735 / DSM 15497 / L2-TR).